Consider the following 729-residue polypeptide: MLYKGDTLYLDWLEDGIAELVFDAPGSVNKLDTATVASLGHALDVLEKQNDLKGLLLRSEKAAFIVGADITEFLSLFLVPEEQLSQWLHFANSVFNRLEDLPVPTISAVNGYALGGGCECVLATDYRLATPDLRIGLPETKLGIMPGFGGSVRLPRLLGADSALEIIAAGKDVGADQALKIGLVDGVVAAEKLRDGALAILRQAINGDLDWKAKRQPKLEPLKLSKIEATMSFTIAKGMVAQTAGKHYPAPITAVKTIEAAARLGREEALVLENKSFVPLAHTNEARALVGIFLNDQYVKAKAKKLTKDVETPKHAAVLGAGIMGGGIAYQSAWKGVPVVMKDISDKSLTLGMTEAAKLLNKQLERGKIDGLKLAGVISTIQPTLEYSGFDRVDVVVEAVVENPKVKKAVLAETEAKVRPDTVLASNTSTIPISELASVLQRPENFCGMHFFNPVHRMPLVEVIRGEKTSDKTIAKVVAWASKMGKTPIVVNDCPGFFVNRVLFPYFAGFSQLLRDGADFRKVDKVMEKQFGWPMGPAYLLDVVGIDTAHHAQAVMAAGFPQRMQKDYRDAIDALFDANRFGQKNGLGFWRYKEDSKGKPKKEEDAAVDSLLADVSQPKRDFSDEEIIARMMIPMVNEVVRCLEEGIIASPAEADMALVYGLGFPPFHGGAFRWLDTIGSAKYLDMAQQYQHLGPLYEVPAGLRDKARHNEAYYPQVEPARPVGALKTA.

Positions 1–189 (MLYKGDTLYL…KIGLVDGVVA (189 aa)) are enoyl-CoA hydratase/isomerase. Asp296 is a binding site for substrate. The interval 311–729 (ETPKHAAVLG…ARPVGALKTA (419 aa)) is 3-hydroxyacyl-CoA dehydrogenase. Residues Met324, Asp343, 400-402 (VVE), Lys407, and Ser429 each bind NAD(+). The active-site For 3-hydroxyacyl-CoA dehydrogenase activity is His450. Residue Asn453 coordinates NAD(+). Asn500 and Tyr660 together coordinate substrate.

The protein in the N-terminal section; belongs to the enoyl-CoA hydratase/isomerase family. In the C-terminal section; belongs to the 3-hydroxyacyl-CoA dehydrogenase family. Heterotetramer of two alpha chains (FadB) and two beta chains (FadA).

The enzyme catalyses a (3S)-3-hydroxyacyl-CoA + NAD(+) = a 3-oxoacyl-CoA + NADH + H(+). It catalyses the reaction a (3S)-3-hydroxyacyl-CoA = a (2E)-enoyl-CoA + H2O. The catalysed reaction is a 4-saturated-(3S)-3-hydroxyacyl-CoA = a (3E)-enoyl-CoA + H2O. It carries out the reaction (3S)-3-hydroxybutanoyl-CoA = (3R)-3-hydroxybutanoyl-CoA. The enzyme catalyses a (3Z)-enoyl-CoA = a 4-saturated (2E)-enoyl-CoA. It catalyses the reaction a (3E)-enoyl-CoA = a 4-saturated (2E)-enoyl-CoA. The protein operates within lipid metabolism; fatty acid beta-oxidation. In terms of biological role, involved in the aerobic and anaerobic degradation of long-chain fatty acids via beta-oxidation cycle. Catalyzes the formation of 3-oxoacyl-CoA from enoyl-CoA via L-3-hydroxyacyl-CoA. It can also use D-3-hydroxyacyl-CoA and cis-3-enoyl-CoA as substrate. This chain is Fatty acid oxidation complex subunit alpha, found in Klebsiella pneumoniae (strain 342).